Reading from the N-terminus, the 91-residue chain is UPF0367 protein cce_2199 (91 aa).

It belongs to the UPF0367 family.

In Crocosphaera subtropica (strain ATCC 51142 / BH68) (Cyanothece sp. (strain ATCC 51142)), this protein is UPF0367 protein cce_2199.